Consider the following 168-residue polypeptide: Group IIF secretory phospholipase A2 (168 aa).

Residues 1–20 (MKKFFTVAILAGSVLSTAHG) form the signal peptide. 7 disulfide bridges follow: Cys-46-Cys-138, Cys-48-Cys-64, Cys-63-Cys-120, Cys-69-Cys-145, Cys-70-Cys-113, Cys-79-Cys-106, and Cys-98-Cys-111. Residues Tyr-47, Gly-49, and Gly-51 each coordinate Ca(2+). The active site involves His-67. Asp-68 provides a ligand contact to Ca(2+). Residues Asn-92 and Asn-102 are each glycosylated (N-linked (GlcNAc...) asparagine). Asp-114 is a catalytic residue. Residues Asn-123 and Asn-144 are each glycosylated (N-linked (GlcNAc...) asparagine). Positions 139-168 (QGPTPNCSIYEPPPEEVTCSHQSPAPPAPP) are required for localization on the plasma membrane.

It belongs to the phospholipase A2 family. Ca(2+) is required as a cofactor. Expressed at high levels in placenta, testis, thymus and at lower levels in heart, kidney, liver and prostate. Highly expressed in rheumatoid arthritic tissues, including synovial lining cells in the intima, capillary endothelial cells and plasma cells.

It is found in the secreted. Its subcellular location is the cell membrane. The enzyme catalyses a 1,2-diacyl-sn-glycero-3-phosphocholine + H2O = a 1-acyl-sn-glycero-3-phosphocholine + a fatty acid + H(+). It catalyses the reaction 1-hexadecanoyl-2-(9Z-octadecenoyl)-sn-glycero-3-phospho-(1'-sn-glycerol) + H2O = 1-hexadecanoyl-sn-glycero-3-phospho-(1'-sn-glycerol) + (9Z)-octadecenoate + H(+). The catalysed reaction is 1-hexadecanoyl-2-(9Z,12Z-octadecadienoyl)-sn-glycero-3-phosphoethanolamine + H2O = 1-hexadecanoyl-sn-glycero-3-phosphoethanolamine + (9Z,12Z)-octadecadienoate + H(+). It carries out the reaction 1-hexadecanoyl-2-(5Z,8Z,11Z,14Z-eicosatetraenoyl)-sn-glycero-3-phosphoethanolamine + H2O = 1-hexadecanoyl-sn-glycero-3-phosphoethanolamine + (5Z,8Z,11Z,14Z)-eicosatetraenoate + H(+). The enzyme catalyses 1-hexadecanoyl-2-(9Z-octadecenoyl)-sn-glycero-3-phosphocholine + H2O = 1-hexadecanoyl-sn-glycero-3-phosphocholine + (9Z)-octadecenoate + H(+). It catalyses the reaction 1-hexadecanoyl-2-(9Z-octadecenoyl)-sn-glycero-3-phospho-L-serine + H2O = 1-hexadecanoyl-sn-glycero-3-phospho-L-serine + (9Z)-octadecenoate + H(+). Functionally, secretory calcium-dependent phospholipase A2 that primarily targets extracellular phospholipids. Hydrolyzes the ester bond of the fatty acyl group attached at the sn-2 position of phospholipids (phospholipase A2 activity), the catalytic efficiency decreasing in the following order: phosphatidylglycerols &gt; phosphatidylethanolamines &gt; phosphatidylcholines &gt; phosphatidylserines. May play a role in lipid mediator production in inflammatory conditions, by providing arachidonic acid to downstream cyclooxygenases and lipoxygenases. The sequence is that of Group IIF secretory phospholipase A2 (PLA2G2F) from Homo sapiens (Human).